Reading from the N-terminus, the 686-residue chain is MRRSGTALSFLWTERVREPVDSGVAPVSPLGGGVILRRFSGTLLLPPLSSRLGSSGEAESAAHVVFTIGTQGTQRNLGSAQSSFDLENGLPGGKGLLDAQSGPSLGRALQPPVHHVQRRESFLYRSDSDHEPSPKAVSRTSSAASDLHGEDMIVTPFAQVLASLRTVRNNVAALAHGPGSATRQVLLGTPPHSSQQAAPTEDSGLQLVQETLEELDWCLEQLETLQTRRSVGEMASNKFKRMLNRELSYLSETSRSGNQVSEYISQTFLDQQAEVELPQPPTEDDPWPMAQITELRRSSHTSLPTAAIPRFGVQTDQEEQLAKELEDTNKWGLDVFKVAELSGNRPLTAVIFSVFQERDLLKTFQIPADTLLAYLLTLEGHYHSDVAYHNSMHAADVVQSAHVLLGTPALEAVFTDLEVLAAIFACAIHDVDHPGVSNQFLINTNSELALMYNDSSVLENHHLAVGFKLLQGENCDIFRNLSTKQRLSLRRMVIDMVLATDMSKHMSLLADLKTMVETKKVTSLGVLLLDNYSDRIQVLQSLVHCADLSNPAKPLPLYRQWTERIMAEFFQQGDRERESGLDISPMCDKHTASMEKSQVGFIDYIAQPLWETWADLVHPDAQELLDTLEDNREWYQSRIPCSPPHTMGSDRFKFELTLEEAEEEEEEEDEGQCTALNRESSELPST.

Residues Ser-9, Ser-28, Ser-40, and Ser-83 each carry the phosphoserine modification. Disordered regions lie at residues 88-116 (NGLP…VHHV) and 124-143 (YRSD…TSSA). Residues 124-133 (YRSDSDHEPS) show a composition bias toward basic and acidic residues. The PDEase domain maps to 313–642 (VQTDQEEQLA…EWYQSRIPCS (330 aa)). His-389 functions as the Proton donor in the catalytic mechanism. Residue His-389 coordinates 3',5'-cyclic AMP. AMP contacts are provided by His-389 and His-393. The Zn(2+) site is built by His-393, His-429, Asp-430, and Asp-547. Asp-430, Asp-547, Gln-598, and Phe-601 together coordinate AMP. Asp-430 is a Mg(2+) binding site. Asp-430 is a Mn(2+) binding site. Residues Gln-598 and Phe-601 each contribute to the 3',5'-cyclic AMP site. Ser-642 carries the post-translational modification Phosphoserine. Residues 660 to 671 (EAEEEEEEEDEG) show a composition bias toward acidic residues. The segment at 660–686 (EAEEEEEEEDEGQCTALNRESSELPST) is disordered. Polar residues predominate over residues 674 to 686 (TALNRESSELPST).

This sequence belongs to the cyclic nucleotide phosphodiesterase family. PDE4 subfamily. In terms of assembly, part of a complex containing AKAP5, ADCY5, ADCY6 and PKD2. It depends on Zn(2+) as a cofactor. Mg(2+) serves as cofactor. Requires Mn(2+) as cofactor.

It is found in the cell projection. The protein resides in the cilium. It catalyses the reaction 3',5'-cyclic AMP + H2O = AMP + H(+). It participates in purine metabolism; 3',5'-cyclic AMP degradation; AMP from 3',5'-cyclic AMP: step 1/1. Functionally, hydrolyzes the second messenger cAMP, which is a key regulator of many important physiological processes. In Mus musculus (Mouse), this protein is 3',5'-cyclic-AMP phosphodiesterase 4C.